Here is a 654-residue protein sequence, read N- to C-terminus: tRNA 5-methylaminomethyl-2-thiouridine biosynthesis bifunctional protein MnmC (654 aa).

The segment at methionine 1–glutamine 235 is tRNA (mnm(5)s(2)U34)-methyltransferase. An FAD-dependent cmnm(5)s(2)U34 oxidoreductase region spans residues valine 261 to glycine 654.

The protein in the N-terminal section; belongs to the methyltransferase superfamily. tRNA (mnm(5)s(2)U34)-methyltransferase family. This sequence in the C-terminal section; belongs to the DAO family. Requires FAD as cofactor.

The protein localises to the cytoplasm. It catalyses the reaction 5-aminomethyl-2-thiouridine(34) in tRNA + S-adenosyl-L-methionine = 5-methylaminomethyl-2-thiouridine(34) in tRNA + S-adenosyl-L-homocysteine + H(+). In terms of biological role, catalyzes the last two steps in the biosynthesis of 5-methylaminomethyl-2-thiouridine (mnm(5)s(2)U) at the wobble position (U34) in tRNA. Catalyzes the FAD-dependent demodification of cmnm(5)s(2)U34 to nm(5)s(2)U34, followed by the transfer of a methyl group from S-adenosyl-L-methionine to nm(5)s(2)U34, to form mnm(5)s(2)U34. The polypeptide is tRNA 5-methylaminomethyl-2-thiouridine biosynthesis bifunctional protein MnmC (Pseudomonas paraeruginosa (strain DSM 24068 / PA7) (Pseudomonas aeruginosa (strain PA7))).